A 130-amino-acid polypeptide reads, in one-letter code: Small ribosomal subunit protein uS11c (130 aa).

It belongs to the universal ribosomal protein uS11 family. In terms of assembly, part of the 30S ribosomal subunit.

The protein resides in the plastid. It localises to the chloroplast. This chain is Small ribosomal subunit protein uS11c, found in Mesostigma viride (Green alga).